The primary structure comprises 393 residues: S-adenosylmethionine synthase (393 aa).

Glu-9 is a Mg(2+) binding site. His-15 lines the ATP pocket. Asp-17 contacts Mg(2+). K(+) is bound at residue Glu-43. Glu-56 and Gln-99 together coordinate L-methionine. ATP-binding positions include 167–169, 235–238, Asp-246, 252–253, Ala-269, Lys-273, and Lys-277; these read DGK, SGRF, and RK. Asp-246 is an L-methionine binding site. Lys-277 contacts L-methionine.

Belongs to the AdoMet synthase family. In terms of assembly, homotetramer; dimer of dimers. It depends on Mn(2+) as a cofactor. Mg(2+) serves as cofactor. Co(2+) is required as a cofactor. The cofactor is K(+).

It is found in the cytoplasm. It carries out the reaction L-methionine + ATP + H2O = S-adenosyl-L-methionine + phosphate + diphosphate. It participates in amino-acid biosynthesis; S-adenosyl-L-methionine biosynthesis; S-adenosyl-L-methionine from L-methionine: step 1/1. Its activity is regulated as follows. Increased activity in the presence of 25 percent acetonitrile, methanol or dimethylformamide. Catalyzes the formation of S-adenosylmethionine from methionine and ATP. The polypeptide is S-adenosylmethionine synthase (Acacia koa (Koa tree)).